A 301-amino-acid chain; its full sequence is Small ribosomal subunit biogenesis GTPase RsgA (301 aa).

Residues 63–224 (INALVRPPIA…IADTPGFSSY (162 aa)) enclose the CP-type G domain. GTP-binding positions include 112–115 (SKAD) and 167–175 (GQTGAGKST). Residues C248, C253, H255, and C261 each coordinate Zn(2+).

It belongs to the TRAFAC class YlqF/YawG GTPase family. RsgA subfamily. Monomer. Associates with 30S ribosomal subunit, binds 16S rRNA. Zn(2+) is required as a cofactor.

Its subcellular location is the cytoplasm. In terms of biological role, one of several proteins that assist in the late maturation steps of the functional core of the 30S ribosomal subunit. Helps release RbfA from mature subunits. May play a role in the assembly of ribosomal proteins into the subunit. Circularly permuted GTPase that catalyzes slow GTP hydrolysis, GTPase activity is stimulated by the 30S ribosomal subunit. This is Small ribosomal subunit biogenesis GTPase RsgA from Leuconostoc citreum (strain KM20).